The chain runs to 227 residues: Cytochrome c oxidase subunit 2 (227 aa).

Topologically, residues 1–14 (MAHPVQLSLQDATS) are mitochondrial intermembrane. The helical transmembrane segment at 15 to 45 (PVMEELITFHDHAFMAMSLISFLVLYALLST) threads the bilayer. Topologically, residues 46-59 (LTTKLTNTSITDAQ) are mitochondrial matrix. The chain crosses the membrane as a helical span at residues 60-87 (EMETIWTILPAIILILIALPSLRILYLT). Residues 88–227 (DEVNDPSFTI…IFEMGPVLTL (140 aa)) are Mitochondrial intermembrane-facing. Histidine 161, cysteine 196, glutamate 198, cysteine 200, histidine 204, and methionine 207 together coordinate Cu cation. Glutamate 198 serves as a coordination point for Mg(2+).

The protein belongs to the cytochrome c oxidase subunit 2 family. Component of the cytochrome c oxidase (complex IV, CIV), a multisubunit enzyme composed of 14 subunits. The complex is composed of a catalytic core of 3 subunits MT-CO1, MT-CO2 and MT-CO3, encoded in the mitochondrial DNA, and 11 supernumerary subunits COX4I, COX5A, COX5B, COX6A, COX6B, COX6C, COX7A, COX7B, COX7C, COX8 and NDUFA4, which are encoded in the nuclear genome. The complex exists as a monomer or a dimer and forms supercomplexes (SCs) in the inner mitochondrial membrane with NADH-ubiquinone oxidoreductase (complex I, CI) and ubiquinol-cytochrome c oxidoreductase (cytochrome b-c1 complex, complex III, CIII), resulting in different assemblies (supercomplex SCI(1)III(2)IV(1) and megacomplex MCI(2)III(2)IV(2)). Found in a complex with TMEM177, COA6, COX18, COX20, SCO1 and SCO2. Interacts with TMEM177 in a COX20-dependent manner. Interacts with COX20. Interacts with COX16. Cu cation is required as a cofactor.

Its subcellular location is the mitochondrion inner membrane. It catalyses the reaction 4 Fe(II)-[cytochrome c] + O2 + 8 H(+)(in) = 4 Fe(III)-[cytochrome c] + 2 H2O + 4 H(+)(out). Functionally, component of the cytochrome c oxidase, the last enzyme in the mitochondrial electron transport chain which drives oxidative phosphorylation. The respiratory chain contains 3 multisubunit complexes succinate dehydrogenase (complex II, CII), ubiquinol-cytochrome c oxidoreductase (cytochrome b-c1 complex, complex III, CIII) and cytochrome c oxidase (complex IV, CIV), that cooperate to transfer electrons derived from NADH and succinate to molecular oxygen, creating an electrochemical gradient over the inner membrane that drives transmembrane transport and the ATP synthase. Cytochrome c oxidase is the component of the respiratory chain that catalyzes the reduction of oxygen to water. Electrons originating from reduced cytochrome c in the intermembrane space (IMS) are transferred via the dinuclear copper A center (CU(A)) of subunit 2 and heme A of subunit 1 to the active site in subunit 1, a binuclear center (BNC) formed by heme A3 and copper B (CU(B)). The BNC reduces molecular oxygen to 2 water molecules using 4 electrons from cytochrome c in the IMS and 4 protons from the mitochondrial matrix. This Macaca mulatta (Rhesus macaque) protein is Cytochrome c oxidase subunit 2 (MT-CO2).